Reading from the N-terminus, the 230-residue chain is Fibrillarin-like rRNA/tRNA 2'-O-methyltransferase (230 aa).

Residues 87–88 (TT), 105–106 (EF), 130–131 (DA), and 150–153 (DVAQ) contribute to the S-adenosyl-L-methionine site.

Belongs to the methyltransferase superfamily. Fibrillarin family. In terms of assembly, interacts with nop5. Component of box C/D small ribonucleoprotein (sRNP) particles that contain rpl7ae, FlpA and nop5, plus a guide RNA.

Involved in pre-rRNA and tRNA processing. Utilizes the methyl donor S-adenosyl-L-methionine to catalyze the site-specific 2'-hydroxyl methylation of ribose moieties in rRNA and tRNA. Site specificity is provided by a guide RNA that base pairs with the substrate. Methylation occurs at a characteristic distance from the sequence involved in base pairing with the guide RNA. The chain is Fibrillarin-like rRNA/tRNA 2'-O-methyltransferase from Methanococcus maripaludis (strain C5 / ATCC BAA-1333).